The chain runs to 200 residues: Protein GrpE (200 aa).

The protein belongs to the GrpE family. In terms of assembly, homodimer.

It localises to the cytoplasm. Functionally, participates actively in the response to hyperosmotic and heat shock by preventing the aggregation of stress-denatured proteins, in association with DnaK and GrpE. It is the nucleotide exchange factor for DnaK and may function as a thermosensor. Unfolded proteins bind initially to DnaJ; upon interaction with the DnaJ-bound protein, DnaK hydrolyzes its bound ATP, resulting in the formation of a stable complex. GrpE releases ADP from DnaK; ATP binding to DnaK triggers the release of the substrate protein, thus completing the reaction cycle. Several rounds of ATP-dependent interactions between DnaJ, DnaK and GrpE are required for fully efficient folding. The chain is Protein GrpE from Shewanella piezotolerans (strain WP3 / JCM 13877).